The following is a 367-amino-acid chain: Peptide chain release factor 2 (367 aa).

N5-methylglutamine is present on Q254.

It belongs to the prokaryotic/mitochondrial release factor family. Methylated by PrmC. Methylation increases the termination efficiency of RF2.

Its subcellular location is the cytoplasm. Its function is as follows. Peptide chain release factor 2 directs the termination of translation in response to the peptide chain termination codons UGA and UAA. The sequence is that of Peptide chain release factor 2 from Variovorax paradoxus (strain S110).